Consider the following 570-residue polypeptide: Conserved oligomeric Golgi complex subunit 8 (570 aa).

Belongs to the COG8 family. In terms of assembly, component of the conserved oligomeric Golgi complex which is composed of eight different subunits and is required for normal Golgi morphology and localization.

The protein resides in the golgi apparatus membrane. Functionally, required for normal Golgi function. This is Conserved oligomeric Golgi complex subunit 8 from Drosophila melanogaster (Fruit fly).